We begin with the raw amino-acid sequence, 593 residues long: NADH-quinone oxidoreductase subunit C/D (593 aa).

The interval 1–184 (MTADNALYIP…DPYSLTLAKQ (184 aa)) is NADH dehydrogenase I subunit C. Residues 208–593 (DYMFLNLGPN…IDFVMADVDR (386 aa)) are NADH dehydrogenase I subunit D.

It in the N-terminal section; belongs to the complex I 30 kDa subunit family. In the C-terminal section; belongs to the complex I 49 kDa subunit family. As to quaternary structure, NDH-1 is composed of 13 different subunits. Subunits NuoB, CD, E, F, and G constitute the peripheral sector of the complex.

Its subcellular location is the cell inner membrane. It carries out the reaction a quinone + NADH + 5 H(+)(in) = a quinol + NAD(+) + 4 H(+)(out). In terms of biological role, NDH-1 shuttles electrons from NADH, via FMN and iron-sulfur (Fe-S) centers, to quinones in the respiratory chain. The immediate electron acceptor for the enzyme in this species is believed to be ubiquinone. Couples the redox reaction to proton translocation (for every two electrons transferred, four hydrogen ions are translocated across the cytoplasmic membrane), and thus conserves the redox energy in a proton gradient. The chain is NADH-quinone oxidoreductase subunit C/D from Pseudomonas syringae pv. syringae (strain B728a).